The sequence spans 356 residues: Probable protein phosphatase 2C T23F11.1 (356 aa).

A PPM-type phosphatase domain is found at 23–286; that stretch reads LVGSSCMQGW…DNMTVVLVGL (264 aa). Mn(2+) contacts are provided by aspartate 59, glycine 60, aspartate 228, and aspartate 277. A disordered region spans residues 336–356; the sequence is NAANQEEEEDDNEPAPANFQV.

Belongs to the PP2C family. Mg(2+) serves as cofactor. The cofactor is Mn(2+).

It catalyses the reaction O-phospho-L-seryl-[protein] + H2O = L-seryl-[protein] + phosphate. It carries out the reaction O-phospho-L-threonyl-[protein] + H2O = L-threonyl-[protein] + phosphate. This chain is Probable protein phosphatase 2C T23F11.1 (ppm-2), found in Caenorhabditis elegans.